A 201-amino-acid polypeptide reads, in one-letter code: NAD(P)H dehydrogenase (quinone) (201 aa).

The region spanning 4-191 (VLVLYYSMYG…KIAKCQGVHV (188 aa)) is the Flavodoxin-like domain. FMN is bound by residues 10–15 (SMYGHV) and 79–81 (TRF). Position 12 (Y12) interacts with NAD(+). W99 is a substrate binding site. Residues 114–120 (STGTQHG) and H135 each bind FMN.

The protein belongs to the WrbA family. FMN is required as a cofactor.

The catalysed reaction is a quinone + NADH + H(+) = a quinol + NAD(+). The enzyme catalyses a quinone + NADPH + H(+) = a quinol + NADP(+). This chain is NAD(P)H dehydrogenase (quinone), found in Hydrogenovibrio crunogenus (strain DSM 25203 / XCL-2) (Thiomicrospira crunogena).